Consider the following 168-residue polypeptide: MIAIYPGSFDPITLGHIDIIERGCNLFEKVIVAVLRNQSKTSLFTIEQRLNQICHSTKHLLNVEVASFDGLAVNYAKMQQAKVLIRGLRVLSDFEKELQMAHTNKTLSPEIETVFLATSNEYSFLSSSVVKEIAVFGGSVDHLVPQHIAIDIYKCYDKTQPKPILNQR.

Position 8 (serine 8) interacts with substrate. ATP is bound by residues 8–9 and histidine 16; that span reads SF. Substrate is bound by residues lysine 40, alanine 72, and arginine 86. ATP contacts are provided by residues 87–89, glutamate 97, and 122–128; these read GLR and YSFLSSS.

The protein belongs to the bacterial CoaD family. In terms of assembly, homohexamer. Mg(2+) serves as cofactor.

It is found in the cytoplasm. The catalysed reaction is (R)-4'-phosphopantetheine + ATP + H(+) = 3'-dephospho-CoA + diphosphate. It functions in the pathway cofactor biosynthesis; coenzyme A biosynthesis; CoA from (R)-pantothenate: step 4/5. Reversibly transfers an adenylyl group from ATP to 4'-phosphopantetheine, yielding dephospho-CoA (dPCoA) and pyrophosphate. The polypeptide is Phosphopantetheine adenylyltransferase (Trichodesmium erythraeum (strain IMS101)).